The sequence spans 178 residues: Translation initiation factor IF-3 (178 aa).

The protein belongs to the IF-3 family. Monomer.

It is found in the cytoplasm. IF-3 binds to the 30S ribosomal subunit and shifts the equilibrium between 70S ribosomes and their 50S and 30S subunits in favor of the free subunits, thus enhancing the availability of 30S subunits on which protein synthesis initiation begins. The polypeptide is Translation initiation factor IF-3 (Ralstonia nicotianae (strain ATCC BAA-1114 / GMI1000) (Ralstonia solanacearum)).